We begin with the raw amino-acid sequence, 824 residues long: AMP deaminase 2 (824 aa).

A disordered region spans residues 1–43 (MASYPGPGKSKAKYPFKKRASLQASAAAPEARSGLGASPLQSA). Positions 10–20 (SKAKYPFKKRA) are enriched in basic residues. S21 carries the post-translational modification Phosphoserine. The segment covering 21–33 (SLQASAAAPEARS) has biased composition (low complexity). Omega-N-methylarginine is present on R44. Phosphoserine occurs at positions 45, 63, and 79. Phosphotyrosine is present on Y90. A phosphoserine mark is found at S96 and S113. Residue T133 is modified to Phosphothreonine. 2 positions are modified to phosphoserine: S135 and S137. Zn(2+) is bound by residues H364 and H366. Substrate-binding positions include H366 and 435 to 440 (KFNAKY). Residue H633 coordinates Zn(2+). E636 is a binding site for substrate. Residue H655 is the Proton acceptor of the active site. D710 contributes to the Zn(2+) binding site. Substrate is bound at residue 711 to 714 (DPLQ).

Belongs to the metallo-dependent hydrolases superfamily. Adenosine and AMP deaminases family. Homotetramer. The cofactor is Zn(2+).

The catalysed reaction is AMP + H2O + H(+) = IMP + NH4(+). It participates in purine metabolism; IMP biosynthesis via salvage pathway; IMP from AMP: step 1/1. In terms of biological role, AMP deaminase plays a critical role in energy metabolism. Catalyzes the deamination of AMP to IMP and plays an important role in the purine nucleotide cycle. The chain is AMP deaminase 2 from Rattus norvegicus (Rat).